The sequence spans 286 residues: Shikimate dehydrogenase (NADP(+)) (286 aa).

Residues 20–22 (SLS) and T67 contribute to the shikimate site. K71 functions as the Proton acceptor in the catalytic mechanism. The shikimate site is built by N92 and D107. Residues 132–136 (GAGGA) and M228 contribute to the NADP(+) site. Y230 contacts shikimate. Residue G251 coordinates NADP(+).

It belongs to the shikimate dehydrogenase family. Homodimer.

The enzyme catalyses shikimate + NADP(+) = 3-dehydroshikimate + NADPH + H(+). It participates in metabolic intermediate biosynthesis; chorismate biosynthesis; chorismate from D-erythrose 4-phosphate and phosphoenolpyruvate: step 4/7. Its function is as follows. Involved in the biosynthesis of the chorismate, which leads to the biosynthesis of aromatic amino acids. Catalyzes the reversible NADPH linked reduction of 3-dehydroshikimate (DHSA) to yield shikimate (SA). In Geobacter sulfurreducens (strain ATCC 51573 / DSM 12127 / PCA), this protein is Shikimate dehydrogenase (NADP(+)).